The following is a 436-amino-acid chain: MRSEAVPQPGGLERFASPGKGRGLRALRRYAVGELLFSCPAYTAVLTVSERGSHCDGCFARKEGLSKCGRCKQAFYCNVECQKEDWPMHKLECAAMCAFGQNWNPSETVRLTARILAKQKIHPERTQSEKLLAVKEFESHLDKLDNEKRELIQNDIAALHHFYSKHMEYPDNAALVVLFAQVNCNGFTIEDEELSHLGSAIFPDVALMNHSCCPNVIVTYKGTLAEVRAVKEIEPGEEVFTSYIDLLYPTEDRNDRLRDSYFFTCDCRECTMKEKDKEKLKIRKLNDPPSAEAVRDMIKYARNVIEEFRRAKHYKPPSELLEICELSLDKMGAVFEDSNVYMLHMMYQAMGVCLYVQDWEGALRYGQKIIRPYSKHYPSYSLNVASMWLKLGRLYMALENRPAGDKALKKAIAIMEVAHGKDHPYISEIKKELEDH.

Residues 10 to 244 (GGLERFASPG…PGEEVFTSYI (235 aa)) form the SET domain. 20 to 22 (KGR) contacts S-adenosyl-L-methionine. 8 residues coordinate Zn(2+): C55, C58, C68, C71, C77, C81, H89, and C93. Residues 55 to 93 (CDGCFARKEGLSKCGRCKQAFYCNVECQKEDWPMHKLEC) form an MYND-type zinc finger. S-adenosyl-L-methionine contacts are provided by residues H140, 209 to 210 (NH), and 261 to 263 (YFF).

It belongs to the class V-like SAM-binding methyltransferase superfamily.

It localises to the cytoplasm. It is found in the cytosol. The protein localises to the nucleus. The enzyme catalyses L-lysyl(4)-[histone H3] + 3 S-adenosyl-L-methionine = N(6),N(6),N(6)-trimethyl-L-lysyl(4)-[histone H3] + 3 S-adenosyl-L-homocysteine + 3 H(+). It carries out the reaction L-lysyl-[protein] + S-adenosyl-L-methionine = N(6)-methyl-L-lysyl-[protein] + S-adenosyl-L-homocysteine + H(+). Protein-lysine N-methyltransferase that methylates both histones and non-histone proteins, including p53/TP53 and RB1. Specifically trimethylates histone H3 'Lys-4' (H3K4me3) in vivo. The activity requires interaction with HSP90alpha. Shows even higher methyltransferase activity on p53/TP53. Monomethylates 'Lys-370' of p53/TP53, leading to decreased DNA-binding activity and subsequent transcriptional regulation activity of p53/TP53. Monomethylates RB1 at 'Lys-860'. The polypeptide is N-lysine methyltransferase SMYD2 (SMYD2) (Gallus gallus (Chicken)).